A 447-amino-acid chain; its full sequence is Cellulosome-anchoring protein (447 aa).

An N-terminal signal peptide occupies residues 1-29; the sequence is MKRIKRILAVLTIFALLATINAFTFVSLA. One can recognise a Cohesin domain in the interval 30–180; the sequence is QTNTIEIIIG…EIIEASAPEA (151 aa). The segment at 30–180 is receptor binding site for duplicated segment of CipA; sequence QTNTIEIIIG…EIIEASAPEA (151 aa). Residues 177–247 are disordered; it reads APEATPTPGS…EHAPFLKGYP (71 aa). Positions 188–200 are enriched in gly residues; that stretch reads AGSGAGGGTGSSG. Residues 201 to 223 are compositionally biased toward low complexity; it reads SGQPSATPTPTATEKPSTTPKTT. SLH domains lie at 216 to 280, 281 to 344, and 345 to 408; these read PSTT…AGKN, SSIT…EQGT, and DVKT…GAVL. The region spanning 409–429 is the SLH 4; truncated domain; sequence EFTDVPVNYWAYKDIAEGVIY.

The protein resides in the secreted. Its subcellular location is the cell wall. It localises to the S-layer. Functionally, anchors the cellulosome to the cell surface by binding the duplicated segment that is present at the C-terminal end of CipA. This is Cellulosome-anchoring protein (ancA) from Acetivibrio thermocellus (strain ATCC 27405 / DSM 1237 / JCM 9322 / NBRC 103400 / NCIMB 10682 / NRRL B-4536 / VPI 7372) (Clostridium thermocellum).